The following is a 645-amino-acid chain: Chaperone protein DnaK (645 aa).

Phosphothreonine; by autocatalysis is present on Thr200. A disordered region spans residues 603-645 (AYSAQKDSGTSTDSTASDTSGNPEERVVDSEYQEIKKDDEDKK). The segment covering 609–623 (DSGTSTDSTASDTSG) has biased composition (low complexity). Basic and acidic residues predominate over residues 625 to 645 (PEERVVDSEYQEIKKDDEDKK).

Belongs to the heat shock protein 70 family.

In terms of biological role, acts as a chaperone. This is Chaperone protein DnaK from Anaplasma marginale (strain St. Maries).